The chain runs to 23 residues: GLLQTITEKLKEFAGGLVTGVQS.

Belongs to the frog skin active peptide (FSAP) family. Aurein subfamily. Expressed by the skin dorsal glands.

It localises to the secreted. In terms of biological role, has no antimicrobial or anticancer activity. The protein is Aurein-4.3 of Ranoidea aurea (Green and golden bell frog).